Reading from the N-terminus, the 197-residue chain is MTHEPHPGAGAERGIMVVVVGPSGAGKDTLMNLAARHFSGRADVHFTRRVITRHRGAGGEDHLSVSLQGFAAMEQSGSFAVWWEAHGLKYGIPAEVSVALSKGHIVVANGSRSALHRFQAAFPRLKVINVTASAEVLAGRLEARGRETHEDIMARLARGPLTVRGDYDVTELDNSGSIEEAEQKMIAILDGLLAEVH.

Residue 21–28 (GPSGAGKD) participates in ATP binding.

The protein belongs to the ribose 1,5-bisphosphokinase family.

It catalyses the reaction alpha-D-ribose 1,5-bisphosphate + ATP = 5-phospho-alpha-D-ribose 1-diphosphate + ADP. Its pathway is metabolic intermediate biosynthesis; 5-phospho-alpha-D-ribose 1-diphosphate biosynthesis; 5-phospho-alpha-D-ribose 1-diphosphate from D-ribose 5-phosphate (route II): step 3/3. Functionally, catalyzes the phosphorylation of ribose 1,5-bisphosphate to 5-phospho-D-ribosyl alpha-1-diphosphate (PRPP). The protein is Ribose 1,5-bisphosphate phosphokinase PhnN of Rhizobium etli (strain CIAT 652).